The sequence spans 295 residues: Inward rectifier potassium channel Kirbac3.1 (295 aa).

Topologically, residues 1–47 are cytoplasmic; sequence MTGGMKPPARKPRILNSDGSSNITRLGLEKRGWLDDHYHDLLTVSWP. The helical transmembrane segment at 48 to 69 threads the bilayer; the sequence is VFITLITGLYLVTNALFALAYL. The Extracellular segment spans residues 70 to 82; that stretch reads ACGDVIENARPGS. Residues 83-95 constitute an intramembrane region (helical; Pore-forming); that stretch reads FTDAFFFSVQTMA. A Selectivity filter motif is present at residues 96-100; sequence TIGYG. Residues 107–131 form a helical membrane-spanning segment; sequence PLANTLVTLEALCGMLGLAVAASLI. The Cytoplasmic portion of the chain corresponds to 132–295; sequence YARFTRPTAG…DLGKFHEIAQ (164 aa).

Belongs to the inward rectifier-type potassium channel (TC 1.A.2.1) family. KCNJ11 subfamily. As to quaternary structure, homotetramer.

Its subcellular location is the membrane. Inward rectifier potassium channel that mediates potassium uptake into the cell. Inward rectifier potassium channels are characterized by a greater tendency to allow potassium to flow into the cell rather than out of it. The inward rectification may be achieved by the blockage of outward current by cytoplasmic divalent metal ions and polyamines. Complements an E.coli mutant that is defective in K(+) uptake. In Paramagnetospirillum magnetotacticum (Aquaspirillum magnetotacticum), this protein is Inward rectifier potassium channel Kirbac3.1.